The following is an 853-amino-acid chain: DNA topoisomerase 1 (853 aa).

Residues 3–136 (KSLVIVESPV…KFRRVVFNEI (134 aa)) form the Toprim domain. Residues E9 and D105 each coordinate Mg(2+). The Topo IA-type catalytic domain maps to 152 to 565 (NMNRVYSQQA…SFFDNFSQQL (414 aa)). The interaction with DNA stretch occupies residues 186 to 191 (SAGRVQ). The active-site O-(5'-phospho-DNA)-tyrosine intermediate is the Y313. 3 C4-type zinc fingers span residues 589-621 (CSLC…EKRC), 649-676 (CKKC…NPSC), and 699-724 (CEKC…NDTC).

The protein belongs to the type IA topoisomerase family. In terms of assembly, monomer. Mg(2+) serves as cofactor.

The enzyme catalyses ATP-independent breakage of single-stranded DNA, followed by passage and rejoining.. In terms of biological role, releases the supercoiling and torsional tension of DNA, which is introduced during the DNA replication and transcription, by transiently cleaving and rejoining one strand of the DNA duplex. Introduces a single-strand break via transesterification at a target site in duplex DNA. The scissile phosphodiester is attacked by the catalytic tyrosine of the enzyme, resulting in the formation of a DNA-(5'-phosphotyrosyl)-enzyme intermediate and the expulsion of a 3'-OH DNA strand. The free DNA strand then undergoes passage around the unbroken strand, thus removing DNA supercoils. Finally, in the religation step, the DNA 3'-OH attacks the covalent intermediate to expel the active-site tyrosine and restore the DNA phosphodiester backbone. The chain is DNA topoisomerase 1 from Buchnera aphidicola subsp. Schizaphis graminum (strain Sg).